We begin with the raw amino-acid sequence, 451 residues long: Velvet complex subunit 2 (451 aa).

Disordered regions lie at residues 1–95, 205–312, and 426–451; these read MNTT…PRSI, PGQS…QTNP, and PIRK…DDDY. Composition is skewed to polar residues over residues 18 to 28, 40 to 62, and 205 to 217; these read TMPSLHDTTYR, MPQT…NSLP, and PGQS…SPTY. The region spanning 92 to 428 is the Velvet domain; sequence PRSITVDGRK…ATQGIKIPIR (337 aa). The span at 267–283 shows a compositional bias: low complexity; the sequence is PQQSNYYYPQPSQSIPS. Basic and acidic residues predominate over residues 427 to 445; the sequence is IRKDGKDGPGKGGKDGSRG.

It belongs to the velvet family. VelB subfamily. Component of the heterotrimeric velvet complex composed of LAE1, VEL1 and VEL2; VEL1 acting as a bridging protein between LAE1 and VEL2. Forms a heterodimeric complex with VOS1; the formation of the VEL2-VOS1 complex is light-dependent.

Its subcellular location is the nucleus. It localises to the cytoplasm. Component of the velvet transcription factor complex that controls sexual/asexual developmental ratio in response to light, promoting sexual development in the darkness while stimulating asexual sporulation under illumination. The velvet complex acts as a global regulator for secondary metabolite gene expression. Component of the VEL2-VOS1 heterodimeric complex that plays a dual role in activating genes associated with spore maturation and repressing certain development-associated genes. The VEL2-VOS1 complex binds DNA through the DNA-binding domain of VOS1 that recognizes an 11-nucleotide consensus sequence 5'-CTGGCCGCGGC-3' consisting of two motifs in the promoters of key developmental regulatory genes. Controls the expression of the oxalic acid and melanin gene clusters. Involved in the resistance to oxidative stress. Required for full virulence. The sequence is that of Velvet complex subunit 2 from Botryotinia fuckeliana (strain B05.10) (Noble rot fungus).